We begin with the raw amino-acid sequence, 108 residues long: uncharacterized protein (108 aa).

This is an uncharacterized protein from Methanocaldococcus jannaschii (strain ATCC 43067 / DSM 2661 / JAL-1 / JCM 10045 / NBRC 100440) (Methanococcus jannaschii).